The chain runs to 237 residues: Sugar fermentation stimulation protein homolog (237 aa).

Belongs to the SfsA family.

This chain is Sugar fermentation stimulation protein homolog, found in Pseudomonas fluorescens (strain Pf0-1).